The following is a 253-amino-acid chain: MRTPIIAGNWKMNKTVQEAKDFVNELPTLPDPKEVESVICAPTIQLDALVTAVKDGKAKGLKIGAQNAYFEESGAYTGETSPVALSELGVKYVVIGHSERRDYFHETDEEVNKKAHAIFNHGMTPIICVGESDEEREAGKANKIVGNQVKKAVEGLSDDQLKEVVIAYEPIWAIGTGKSSTSEDANEMCAHVRQTLADLSSQEVADATRIQYGGSVKPNNIKEYMAQSDIDGALVGGASLKVEDFVQLLEGAK.

9–11 (NWK) is a substrate binding site. Residue H97 is the Electrophile of the active site. The active-site Proton acceptor is E169. Substrate-binding positions include G175, S215, and 236–237 (GG).

Belongs to the triosephosphate isomerase family. In terms of assembly, homodimer.

Its subcellular location is the cytoplasm. The enzyme catalyses D-glyceraldehyde 3-phosphate = dihydroxyacetone phosphate. It participates in carbohydrate biosynthesis; gluconeogenesis. Its pathway is carbohydrate degradation; glycolysis; D-glyceraldehyde 3-phosphate from glycerone phosphate: step 1/1. Functionally, involved in the gluconeogenesis. Catalyzes stereospecifically the conversion of dihydroxyacetone phosphate (DHAP) to D-glyceraldehyde-3-phosphate (G3P). The chain is Triosephosphate isomerase from Staphylococcus epidermidis (strain ATCC 35984 / DSM 28319 / BCRC 17069 / CCUG 31568 / BM 3577 / RP62A).